The following is a 102-amino-acid chain: MAGQKIRIRLKAYDHEVIDSSARKIVDTVTRTGASVAGPVPLPTEKNVYCVIRSPHKYKDSREHFEMRTHKRLIDIIDPTPKTVDSLMRLDLPAGVDIEIKL.

It belongs to the universal ribosomal protein uS10 family. Part of the 30S ribosomal subunit.

In terms of biological role, involved in the binding of tRNA to the ribosomes. This Kineococcus radiotolerans (strain ATCC BAA-149 / DSM 14245 / SRS30216) protein is Small ribosomal subunit protein uS10.